Reading from the N-terminus, the 199-residue chain is Dephospho-CoA kinase (199 aa).

In terms of domain architecture, DPCK spans 3-199 (TLGVTGGIGS…ELYWAVTGGQ (197 aa)). 11–16 (GSGKTT) contacts ATP.

It belongs to the CoaE family.

It is found in the cytoplasm. The catalysed reaction is 3'-dephospho-CoA + ATP = ADP + CoA + H(+). The protein operates within cofactor biosynthesis; coenzyme A biosynthesis; CoA from (R)-pantothenate: step 5/5. Functionally, catalyzes the phosphorylation of the 3'-hydroxyl group of dephosphocoenzyme A to form coenzyme A. In Salinibacter ruber (strain DSM 13855 / M31), this protein is Dephospho-CoA kinase.